A 513-amino-acid chain; its full sequence is Zinc finger CCCH-type with G patch domain-containing protein (513 aa).

The segment at 155–178 (PCSYYLEGECRFDETKCRFSHGAL) adopts a C3H1-type zinc-finger fold. 2 stretches are compositionally biased toward acidic residues: residues 252–261 (DQDEDDELSS) and 271–283 (DSSDEAESDMDDL). The tract at residues 252–283 (DQDEDDELSSEESNSSMNDDSSDEAESDMDDL) is disordered. The G-patch domain maps to 312–358 (TRGIGSKLMEKMGYIHGTGLGSDGRGIVTPVSAQILPQGRSLDACME). A compositionally biased stretch (basic and acidic residues) spans 455-467 (DMAKVKQSLDRNS). Residues 455–513 (DMAKVKQSLDRNSGDAQLQKRLQVQMESHKQELATLQAQERSLSKEQQTRKSKNKMFEF) form a disordered region. A compositionally biased stretch (polar residues) spans 468–480 (GDAQLQKRLQVQM). Residues 496–513 (SLSKEQQTRKSKNKMFEF) are compositionally biased toward basic and acidic residues.

The protein resides in the nucleus. Its function is as follows. Transcription repressor. This is Zinc finger CCCH-type with G patch domain-containing protein from Drosophila yakuba (Fruit fly).